The primary structure comprises 199 residues: Peptidyl-tRNA hydrolase (199 aa).

Tyr15 is a binding site for tRNA. The Proton acceptor role is filled by His20. The tRNA site is built by Tyr66, Asn68, and Asn114.

This sequence belongs to the PTH family. In terms of assembly, monomer.

The protein localises to the cytoplasm. It carries out the reaction an N-acyl-L-alpha-aminoacyl-tRNA + H2O = an N-acyl-L-amino acid + a tRNA + H(+). Its function is as follows. Hydrolyzes ribosome-free peptidyl-tRNAs (with 1 or more amino acids incorporated), which drop off the ribosome during protein synthesis, or as a result of ribosome stalling. Functionally, catalyzes the release of premature peptidyl moieties from peptidyl-tRNA molecules trapped in stalled 50S ribosomal subunits, and thus maintains levels of free tRNAs and 50S ribosomes. In Burkholderia cenocepacia (strain ATCC BAA-245 / DSM 16553 / LMG 16656 / NCTC 13227 / J2315 / CF5610) (Burkholderia cepacia (strain J2315)), this protein is Peptidyl-tRNA hydrolase.